A 341-amino-acid polypeptide reads, in one-letter code: Heme A synthase (341 aa).

The next 8 helical transmembrane spans lie at 8–28 (VIIW…VGGI), 92–112 (FHRF…VYFL), 126–146 (IVLL…VRSG), 160–180 (LHLT…LDLI), 201–221 (AALL…AGLI), 256–276 (VQFV…FLFF), 294–314 (LVVF…YSVP), and 315–335 (LALG…MTYT). Residue histidine 260 coordinates heme. Histidine 321 serves as a coordination point for heme.

The protein belongs to the COX15/CtaA family. Type 2 subfamily. As to quaternary structure, interacts with CtaB. Requires heme b as cofactor.

Its subcellular location is the cell membrane. It carries out the reaction Fe(II)-heme o + 2 A + H2O = Fe(II)-heme a + 2 AH2. The protein operates within porphyrin-containing compound metabolism; heme A biosynthesis; heme A from heme O: step 1/1. Its function is as follows. Catalyzes the conversion of heme O to heme A by two successive hydroxylations of the methyl group at C8. The first hydroxylation forms heme I, the second hydroxylation results in an unstable dihydroxymethyl group, which spontaneously dehydrates, resulting in the formyl group of heme A. This is Heme A synthase from Flavobacterium johnsoniae (strain ATCC 17061 / DSM 2064 / JCM 8514 / BCRC 14874 / CCUG 350202 / NBRC 14942 / NCIMB 11054 / UW101) (Cytophaga johnsonae).